The chain runs to 131 residues: Small ribosomal subunit protein uS8 (131 aa).

The protein belongs to the universal ribosomal protein uS8 family. Part of the 30S ribosomal subunit. Contacts proteins S5 and S12.

Its function is as follows. One of the primary rRNA binding proteins, it binds directly to 16S rRNA central domain where it helps coordinate assembly of the platform of the 30S subunit. The protein is Small ribosomal subunit protein uS8 of Hamiltonella defensa subsp. Acyrthosiphon pisum (strain 5AT).